The primary structure comprises 307 residues: Elongation factor Ts, mitochondrial (307 aa).

A mitochondrion-targeting transit peptide spans 1-19; that stretch reads MIFTRLTRFVGHGTGLRLY.

Belongs to the EF-Ts family.

The protein localises to the mitochondrion. In terms of biological role, associates with the EF-Tu.GDP complex and induces the exchange of GDP to GTP. It remains bound to the aminoacyl-tRNA.EF-Tu.GTP complex up to the GTP hydrolysis stage on the ribosome. In Aedes aegypti (Yellowfever mosquito), this protein is Elongation factor Ts, mitochondrial.